A 462-amino-acid polypeptide reads, in one-letter code: Coagulation factor IX (462 aa).

An N-terminal signal peptide occupies residues 1-21; it reads MADAPGLIPIFLLGYLLSTEC. The propeptide occupies 22–39; the sequence is AVFLDRENATKILTRPKR. Ca(2+) is bound by residues tyrosine 40, asparagine 41, glutamate 46, glutamate 47, glutamate 54, glutamate 56, glutamate 59, glutamate 60, glutamate 65, glutamate 66, and glutamate 69. The 47-residue stretch at 40 to 86 folds into the Gla domain; the sequence is YNSGKLEEFVQGNLERECIEERCSFEEAREVFENTEKTTEFWKQYVD. A 4-carboxyglutamate mark is found at glutamate 46, glutamate 47, glutamate 54, glutamate 56, glutamate 59, glutamate 60, glutamate 65, glutamate 66, glutamate 69, glutamate 72, and glutamate 75. Glutamate 54 lines the Mg(2+) pocket. A disulfide bond links cysteine 57 and cysteine 62. Mg(2+) is bound at residue glutamate 59. Glutamate 65 contributes to the Mg(2+) binding site. Glutamate 69 provides a ligand contact to Mg(2+). Position 75 (glutamate 75) interacts with Ca(2+). Residue glutamate 75 coordinates Mg(2+). Threonine 78 carries O-linked (GalNAc...) threonine glycosylation. Positions 79, 86, 87, and 89 each coordinate Ca(2+). Glutamate 79 carries the post-translational modification 4-carboxyglutamate. Glutamate 79 is a Mg(2+) binding site. The EGF-like; calcium-binding domain maps to 86–122; the sequence is DGDQCESNPCLNGGICKDDINSYECWCQAGFEGRNCE. 10 cysteine pairs are disulfide-bonded: cysteine 90/cysteine 101, cysteine 95/cysteine 110, cysteine 112/cysteine 121, cysteine 127/cysteine 138, cysteine 134/cysteine 148, cysteine 150/cysteine 163, cysteine 171/cysteine 336, cysteine 253/cysteine 269, cysteine 383/cysteine 397, and cysteine 408/cysteine 436. Residue serine 92 is glycosylated (O-linked (Glc...) serine). Ca(2+) contacts are provided by aspartate 103 and aspartate 104. (3R)-3-hydroxyaspartate is present on aspartate 103. A Phosphoserine modification is found at serine 107. The propeptide at 186-227 is activation peptide; that stretch reads AETVFSNTDYGNSTELILDDITNSTILDNLTENSEPINDFTR. A Sulfotyrosine modification is found at tyrosine 195. Phosphoserine is present on serine 198. Threonine 199 is subject to Phosphothreonine; alternate. An O-linked (GalNAc...) threonine; alternate glycan is attached at threonine 199. N-linked (GlcNAc...) asparagine glycosylation is found at asparagine 208 and asparagine 214. O-linked (GalNAc...) threonine glycans are attached at residues threonine 216 and threonine 226. The Peptidase S1 domain occupies 228-460; that stretch reads VVGGENAKPG…YVNWIKEKTK (233 aa). The active-site Charge relay system is the histidine 268. Glutamate 282, asparagine 284, glutamate 287, glutamate 289, and glutamate 292 together coordinate Ca(2+). The N-linked (GlcNAc...) asparagine glycan is linked to asparagine 307. Aspartate 316 acts as the Charge relay system in catalysis. The active-site Charge relay system is the serine 412.

It belongs to the peptidase S1 family. Heterodimer of a light chain and a heavy chain; disulfide-linked. Interacts (inactive and activated) with F11 (activated) in calcium-dependent manner. Interacts with SERPINC1. Interacts (inactive and activated) with nitrophorin-2, an anticoagulant protein from Rhodnius prolixus. Post-translationally, activated by factor XIa, which excises the activation peptide. The propeptide can also be removed by snake venom protease. Activated by coagulation factor VIIa-tissue factor (F7-F3) complex in calcium-dependent manner. In terms of processing, the iron and 2-oxoglutarate dependent 3-hydroxylation of aspartate and asparagine is (R) stereospecific within EGF domains. Predominantly O-glucosylated at Ser-92 by POGLUT1 in vitro.

Its subcellular location is the secreted. The enzyme catalyses Selective cleavage of Arg-|-Ile bond in factor X to form factor Xa.. Functionally, factor IX is a vitamin K-dependent plasma protein that participates in the intrinsic pathway of blood coagulation by converting factor X to its active form in the presence of Ca(2+) ions, phospholipids, and factor VIIIa. In Rattus norvegicus (Rat), this protein is Coagulation factor IX (F9).